A 311-amino-acid chain; its full sequence is JNK1/MAPK8-associated membrane protein (311 aa).

Topologically, residues 1 to 57 (MAVDIQPACLGLYCGKTLLFKNGSSEIYGECGVCPRGQRTNAQKYCQPCTESPELYD) are lumenal. The N-linked (GlcNAc...) asparagine glycan is linked to asparagine 22. Residues 58–78 (WLYLGFMAMLPLVLHWFFIEW) form a helical membrane-spanning segment. At 79–87 (YSGKKSSSA) the chain is on the cytoplasmic side. The helical transmembrane segment at 88 to 108 (LFQHITALFECTMAAIITLLV) threads the bilayer. At 109–149 (SDPVGVLYIRSCRVLMLSDWYTMLYNPSPDYVTTVHCTHEA) the chain is on the lumenal side. Residues 150–170 (VYPLYTIVFVYYAFCLVLMML) form a helical membrane-spanning segment. Residues 171–188 (LRPLLVKKIACGLGKSDR) are Cytoplasmic-facing. Residues 189 to 209 (FKSIYAALYFFPILTVLQAVG) traverse the membrane as a helical segment. Glycine 210 is a topological domain (lumenal). The helical transmembrane segment at 211–231 (GLLYYAFPYIILVLSLVTLAV) threads the bilayer. Topologically, residues 232 to 250 (YMSASEIENCYDLLVRKKR) are cytoplasmic. Residues 251-271 (LIVLFSHWLLHAYGIVSISRV) form a helical membrane-spanning segment. Residues 272–277 (DRLEHD) lie on the Lumenal side of the membrane. A helical transmembrane segment spans residues 278 to 298 (LPLLALVPTPALFYLFTAKFT). At 299-311 (EPSRILSEGANGH) the chain is on the cytoplasmic side.

Interacts with RNF5 and MAPK8, but not with MAPK9. Binding to MAPK8 occurs before and after exposure to stress, such as UV irradiation. After exposure to stress, interacts with phosphorylated MAPK8. Competes with DUSP10 for MAPK8 binding. Associates with multiple components of the proteasome and with ERAD regulatory proteins, including AMFR/GP78, CANX, PSMC1, PSMC2, PSMC3/TBP1, PSMC5, PSMC6, PSMD8, SEC61-ALPHA and UFD1. Ubiquitinated by RNF5 via 'Lys-63'-linked ubiquitin linkage in a UBE2N-dependent manner. Ubiquitination decreases association with components of the proteasome and ERAD. In terms of tissue distribution, expressed in numerous tissues, including brain, spleen, thymus, liver, kidney and testis.

The protein localises to the endoplasmic reticulum membrane. Its function is as follows. Regulates the duration of MAPK8 activity in response to various stress stimuli. Facilitates degradation of misfolded endoplasmic reticulum (ER) proteins through the recruitment of components of the proteasome and endoplasmic reticulum-associated degradation (ERAD) system. This chain is JNK1/MAPK8-associated membrane protein (Jkamp), found in Mus musculus (Mouse).